The sequence spans 120 residues: UPF0231 protein YE0706 (120 aa).

Belongs to the UPF0231 family.

The protein is UPF0231 protein YE0706 of Yersinia enterocolitica serotype O:8 / biotype 1B (strain NCTC 13174 / 8081).